Here is a 169-residue protein sequence, read N- to C-terminus: Probable calcium-binding protein CML13 (169 aa).

Residues 1–26 (MSTVKGQTRRERPRGARPHGLTKQKR) form a disordered region. The segment covering 15-24 (GARPHGLTKQ) has biased composition (basic residues). 4 EF-hand domains span residues 24–59 (QKRQ…LGFE), 60–95 (MTEE…KIGE), 97–132 (DSKE…LGEN), and 133–168 (FTYQ…TGYG). 20 residues coordinate Ca(2+): Asp37, Asp39, Ser41, Thr43, Glu48, Asp73, Asp75, Ser77, Ser79, Glu84, Asp110, Asp112, Asn114, Lys116, Asp121, Asp146, Asn148, Asp150, Glu152, and Glu157.

Functionally, potential calcium sensor. The protein is Probable calcium-binding protein CML13 (CML13) of Oryza sativa subsp. japonica (Rice).